The following is a 91-amino-acid chain: DNA-directed RNA polymerase subunit omega (91 aa).

The protein belongs to the RNA polymerase subunit omega family. The RNAP catalytic core consists of 2 alpha, 1 beta, 1 beta' and 1 omega subunit. When a sigma factor is associated with the core the holoenzyme is formed, which can initiate transcription.

It carries out the reaction RNA(n) + a ribonucleoside 5'-triphosphate = RNA(n+1) + diphosphate. Its function is as follows. Promotes RNA polymerase assembly. Latches the N- and C-terminal regions of the beta' subunit thereby facilitating its interaction with the beta and alpha subunits. This Proteus mirabilis (strain HI4320) protein is DNA-directed RNA polymerase subunit omega.